Consider the following 320-residue polypeptide: Lactamase-like protein GME11357 (320 aa).

Zn(2+) contacts are provided by H106, H108, D110, and H111. The active-site Proton donor/acceptor is the D110.

It belongs to the metallo-beta-lactamase superfamily. Zn(2+) serves as cofactor.

It functions in the pathway secondary metabolite biosynthesis. Functionally, lactamase-like protein; part of the gene cluster that mediates the biosynthesis of dibenzodioxocinones such as pestalotiollide B, a novel class of inhibitors against cholesterol ester transfer protein (CEPT). The biosynthesis initiates from condensation of acetate and malonate units catalyzed by the non-reducing PKS pks8/GME11356. Pks8/GME11356 lacks a thioesterase (TE) domain, which is important to the cyclizing of the third ring of atrochrysone carboxylic acid, and the esterase GME11355 might play the role of TE and catalyzes the cyclization reaction of the C ring. The lactamase-like protein GME11357 (or other beta-lactamases in Pestalotiopsis microspora) probably hydrolyzes the thioester bond between the ACP of pks8/GME11356 and the intermediate to release atrochrysone carboxylic acid, which is spontaneously dehydrates to form endocrocin anthrone. Endocrocin anthrone is further converted to emodin via the endocrocin intermediate. Emodin is then oxidized by several enzymes such as the Baeyer-Villiger oxidase GME11358, the oxidoreductase GME11367, the short chain dehydrogenase/reductase GME11373, as well as by other oxidoreductases from the cluster, to modify the A and C rings and open the B ring, and finally yield monodictyphenone. The prenyltransferase GME11375 may catalyze the addition reaction between the C5 side chains and the carbon bone of dibenzodioxocinones. The remaining biochemical reactions to the final product dibenzodioxocinones should be methylation catalyzed by methyltransferase GME11366 and reduction and lactonization reaction catalyzed by a series of oxidordeuctases. This is Lactamase-like protein GME11357 from Pestalotiopsis microspora.